The sequence spans 148 residues: Probable DNA-directed RNA polymerases I, II, and III subunit RPABC3 (148 aa).

Residues aspartate 16–isoleucine 40 form a non-specific ssDNA binding region.

The protein belongs to the eukaryotic RPB8 RNA polymerase subunit family. As to quaternary structure, component of the RNA polymerase I (Pol I), RNA polymerase II (Pol II) and RNA polymerase III (Pol III) complexes consisting of at least 13, 12 and 17 subunits, respectively. Directly interacts with POLR2A.

Its subcellular location is the nucleus. DNA-dependent RNA polymerase catalyzes the transcription of DNA into RNA using the four ribonucleoside triphosphates as substrates. Common component of RNA polymerases I, II and III which synthesize ribosomal RNA precursors, mRNA precursors and many functional non-coding RNAs, and small RNAs, such as 5S rRNA and tRNAs, respectively. The chain is Probable DNA-directed RNA polymerases I, II, and III subunit RPABC3 from Caenorhabditis briggsae.